The sequence spans 205 residues: Ribosomal RNA small subunit methyltransferase G (205 aa).

S-adenosyl-L-methionine is bound by residues Gly66, Phe71, 119 to 120 (IE), and Arg135.

The protein belongs to the methyltransferase superfamily. RNA methyltransferase RsmG family.

The protein localises to the cytoplasm. It catalyses the reaction guanosine(527) in 16S rRNA + S-adenosyl-L-methionine = N(7)-methylguanosine(527) in 16S rRNA + S-adenosyl-L-homocysteine. In terms of biological role, specifically methylates the N7 position of guanine in position 527 of 16S rRNA. The chain is Ribosomal RNA small subunit methyltransferase G from Rhizobium etli (strain ATCC 51251 / DSM 11541 / JCM 21823 / NBRC 15573 / CFN 42).